The primary structure comprises 164 residues: Large ribosomal subunit protein bL17 (164 aa).

The segment at 127-164 (RARTDSVPARKGAGKKDASRVSGTVPDGQSQKIGKKKE) is disordered.

Belongs to the bacterial ribosomal protein bL17 family. Part of the 50S ribosomal subunit. Contacts protein L32.

The polypeptide is Large ribosomal subunit protein bL17 (Treponema pallidum (strain Nichols)).